Here is a 61-residue protein sequence, read N- to C-terminus: Metallothionein-2 (61 aa).

Residue M1 is modified to N-acetylmethionine. Positions 1–29 (MDPNCSCATDGSCSCAGSCKCKECKCTTC) are beta. A divalent metal cation contacts are provided by C5, C7, C13, C15, C19, C21, C24, C26, C29, C33, C34, C36, C37, C41, C44, C48, C50, and C57. Residues 30 to 61 (KKSCCSCCPVGCAKCSQGCVCKEASDKCSCCA) form an alpha region. At S58 the chain carries Phosphoserine. Residues C59 and C60 each coordinate a divalent metal cation.

The protein belongs to the metallothionein superfamily. Type 1 family.

Metallothioneins have a high content of cysteine residues that bind various heavy metals; these proteins are transcriptionally regulated by both heavy metals and glucocorticoids. The sequence is that of Metallothionein-2 (MT2) from Cricetulus griseus (Chinese hamster).